The sequence spans 88 residues: UPF0250 protein Sama_2593 (88 aa).

Belongs to the UPF0250 family.

In Shewanella amazonensis (strain ATCC BAA-1098 / SB2B), this protein is UPF0250 protein Sama_2593.